We begin with the raw amino-acid sequence, 220 residues long: Phosphoserine phosphatase (220 aa).

Aspartate 11 (nucleophile) is an active-site residue. Positions 11 and 13 each coordinate Mg(2+). The active-site Proton donor is aspartate 13. Substrate-binding positions include glutamate 20, arginine 56, serine 99–glycine 100, and lysine 144. Mg(2+) is bound at residue aspartate 167. Residue asparagine 170 participates in substrate binding.

Belongs to the HAD-like hydrolase superfamily. SerB family. Mg(2+) is required as a cofactor.

It carries out the reaction O-phospho-L-serine + H2O = L-serine + phosphate. The enzyme catalyses O-phospho-D-serine + H2O = D-serine + phosphate. The protein operates within amino-acid biosynthesis; L-serine biosynthesis; L-serine from 3-phospho-D-glycerate: step 3/3. The sequence is that of Phosphoserine phosphatase from Idiomarina loihiensis (strain ATCC BAA-735 / DSM 15497 / L2-TR).